The chain runs to 84 residues: Small ribosomal subunit protein bS20 (84 aa).

It belongs to the bacterial ribosomal protein bS20 family.

Its function is as follows. Binds directly to 16S ribosomal RNA. The chain is Small ribosomal subunit protein bS20 from Latilactobacillus sakei subsp. sakei (strain 23K) (Lactobacillus sakei subsp. sakei).